The sequence spans 67 residues: Small ribosomal subunit protein eS17 (67 aa).

The protein belongs to the eukaryotic ribosomal protein eS17 family.

The protein is Small ribosomal subunit protein eS17 of Thermococcus gammatolerans (strain DSM 15229 / JCM 11827 / EJ3).